The following is a 135-amino-acid chain: NADH-quinone oxidoreductase subunit A (135 aa).

The next 3 membrane-spanning stretches (helical) occupy residues 9 to 29 (YFPI…LLTV), 67 to 87 (VGML…WVVV), and 97 to 117 (LFGF…FFYI).

Belongs to the complex I subunit 3 family. As to quaternary structure, NDH-1 is composed of 14 different subunits. Subunits NuoA, H, J, K, L, M, N constitute the membrane sector of the complex.

Its subcellular location is the cell inner membrane. It carries out the reaction a quinone + NADH + 5 H(+)(in) = a quinol + NAD(+) + 4 H(+)(out). Its function is as follows. NDH-1 shuttles electrons from NADH, via FMN and iron-sulfur (Fe-S) centers, to quinones in the respiratory chain. The immediate electron acceptor for the enzyme in this species is believed to be ubiquinone. Couples the redox reaction to proton translocation (for every two electrons transferred, four hydrogen ions are translocated across the cytoplasmic membrane), and thus conserves the redox energy in a proton gradient. This chain is NADH-quinone oxidoreductase subunit A, found in Solibacter usitatus (strain Ellin6076).